The chain runs to 221 residues: Esterase C25G4.2 (221 aa).

Residues Ser-106, Asp-166, and His-194 each act as charge relay system in the active site.

The protein belongs to the LovG family.

This is Esterase C25G4.2 from Caenorhabditis elegans.